The chain runs to 693 residues: Polyribonucleotide nucleotidyltransferase (693 aa).

Mg(2+)-binding residues include aspartate 489 and aspartate 495. The 60-residue stretch at 556–615 (PQIHVMNINPAKIKDVVGRGGATVKGIVEKTGAQIDTSDSGEVKVFAKDKKSMDMAVAMI) folds into the KH domain. Residues 625–693 (GQVYKGKIVK…GRVKLSLVAR (69 aa)) enclose the S1 motif domain.

The protein belongs to the polyribonucleotide nucleotidyltransferase family. In terms of assembly, component of the RNA degradosome, which is a multiprotein complex involved in RNA processing and mRNA degradation. Mg(2+) is required as a cofactor.

Its subcellular location is the cytoplasm. The catalysed reaction is RNA(n+1) + phosphate = RNA(n) + a ribonucleoside 5'-diphosphate. In terms of biological role, involved in mRNA degradation. Catalyzes the phosphorolysis of single-stranded polyribonucleotides processively in the 3'- to 5'-direction. This is Polyribonucleotide nucleotidyltransferase from Francisella tularensis subsp. novicida (strain U112).